The primary structure comprises 166 residues: MQIKTKGDLVRAALRKLGVASDATLTDVEPQSMQDAVDDLEAMMAEWYQDGKGIITGYVFSDDENPPAEGDDHGLRSSAVSAVFHNLACRIAPDYALEATAKIIATAKYGKELLYKQTAISRAKRAPYPSRMPTGSGNSFANLNEWHYFPGEQNADSTTPHDEGNG.

As to quaternary structure, monomer; homododecamer upon binding to the portal ring. Interacts (via C-terminus) with the portal protein; this interaction participates in the head completion. Interacts with the Tail hub protein gp10. Interacts with the tail needle protein gp26.

The protein localises to the virion. Tail protein that binds the portal ring and functions as a head completion protein. 12 copies of gp4 form a structural ring at the bottom of the portal ring. Together with gp10 and gp26, gp4 is required for stabilization of the condensed DNA within the capsid; perhaps by plugging the hole through which the DNA enters. Plays a role in ejection of the bacteriophage DNA into the host cell at the initiation of infection. Functions as an exolysin that catalyzes the cleavage of the glycosidic bonds between N-acetylmuramic acid and N-acetylglucosamine residues in peptidoglycans. This is Head-to-tail adapter protein gp4 (4) from Salmonella typhimurium (Bacteriophage P22).